A 519-amino-acid chain; its full sequence is Ribonuclease Y (519 aa).

A helical transmembrane segment spans residues 3 to 23 (LLSLLLILLGIILGVVVGYIV). One can recognise a KH domain in the interval 209–269 (TVSVVNLPND…IRREIARTAL (61 aa)). The region spanning 335-428 (VLKHSIEVAH…VAAADALSAA (94 aa)) is the HD domain.

The protein belongs to the RNase Y family.

The protein resides in the cell membrane. In terms of biological role, endoribonuclease that initiates mRNA decay. This Staphylococcus epidermidis (strain ATCC 35984 / DSM 28319 / BCRC 17069 / CCUG 31568 / BM 3577 / RP62A) protein is Ribonuclease Y.